We begin with the raw amino-acid sequence, 1859 residues long: Retinitis pigmentosa 1-like 1 protein (1859 aa).

Disordered regions lie at residues 1–22 (MNSTPGDTRDAPAPSHPAPSHR) and 115–154 (RKPPKTSREPGRLQRKSPSAGQAQVFQGGHEAPETSYSWK). Residues 42 to 126 (KKITFLKRGD…PPKTSREPGR (85 aa)) form the Doublecortin 1 domain. A compositionally biased stretch (basic and acidic residues) spans 115–126 (RKPPKTSREPGR). Residues 130–139 (KSPSAGQAQV) are compositionally biased toward polar residues. The 80-residue stretch at 160 to 239 (RRLTLVKNGD…NEAFRCLEME (80 aa)) folds into the Doublecortin 2 domain. Disordered stretches follow at residues 263–301 (PNAKQSVIHSRGRSGGKLRQVSLTSERSGLSDHPASGHR), 426–445 (IWRNPLATPEGTGPTPRRRW), 457–593 (WRQE…TQSH), 700–750 (MPQE…TSKA), 868–920 (CFGR…TPSA), 952–997 (NTEV…GVLS), 1152–1211 (TEDF…YPEL), 1227–1255 (ATGGEETGKGGRKQTWGNAPEQSVHSTML), 1298–1350 (GSQD…RVRE), and 1567–1859 (LQSK…DLDF). Basic and acidic residues predominate over residues 457 to 472 (WRQEANHRKGHDKDNL). Polar residues-rich tracts occupy residues 499–512 (GSDTLHPVSSASSH) and 535–551 (PETQSTERALSDTSVSA). Residues 716–728 (SPSNSPSAGNQAS) show a composition bias toward low complexity. The span at 734–750 (PFSSSLDLQEPQATSKA) shows a compositional bias: polar residues. Low complexity predominate over residues 870–883 (GRESASNGSTSSGH). Polar residues-rich tracts occupy residues 1241 to 1252 (TWGNAPEQSVHS), 1336 to 1345 (ESPQHFSESN), and 1567 to 1577 (LQSKKGGSSNR). A compositionally biased stretch (basic and acidic residues) spans 1616 to 1632 (GEGKQRLRAEEDPEILK). Acidic residues predominate over residues 1641-1652 (PEEDEATEEDGE). Positions 1700-1720 (EASRERQQEVEGRHQDVKEDS) are enriched in basic and acidic residues. Residues 1756–1778 (SHHTACSSRALSLDNSSQVSQKG) show a composition bias toward polar residues.

As to quaternary structure, interacts with RP1; has a synergistic effect with RP1 in photoreceptor differentiation. Retinal-specific; expressed in photoreceptor.

Its subcellular location is the cytoplasm. The protein resides in the cytoskeleton. The protein localises to the cilium axoneme. It is found in the cell projection. It localises to the cilium. Its subcellular location is the photoreceptor outer segment. Its function is as follows. Required for the differentiation of photoreceptor cells. Plays a role in the organization of outer segment of rod and cone photoreceptors. The protein is Retinitis pigmentosa 1-like 1 protein (Rp1l1) of Mus musculus (Mouse).